The sequence spans 266 residues: ATG8-interacting protein 2 (266 aa).

The short motif at 14-17 (WEVV) is the AIM (Atg8-family-interacting motif) element. A helical transmembrane segment spans residues 191–210 (TNTVWSICIAAAVMGIVILG). Residues 218-221 (WQIL) carry the AIM (Atg8-family-interacting motif) motif.

Interacts with ATG8F.

Its subcellular location is the endoplasmic reticulum membrane. It is found in the membrane. Its function is as follows. May be involved in salt stress-induced vesicle-to-vacuole trafficking pathway. Through its interaction with ATG8F, may enable delivery of the vesicle bodies to the vacuole by an autophagic pathway. Plays a role in seed germination in response to exogenous abscisic acid (ABA) treatment. The chain is ATG8-interacting protein 2 from Arabidopsis thaliana (Mouse-ear cress).